The sequence spans 461 residues: tRNA modification GTPase MnmE (461 aa).

Positions 22, 87, and 126 each coordinate (6S)-5-formyl-5,6,7,8-tetrahydrofolate. The 161-residue stretch at 222–382 (GLKTVIVGKP…LEETIFNMVV (161 aa)) folds into the TrmE-type G domain. Asparagine 232 is a K(+) binding site. GTP is bound by residues 232–237 (NVGKSS), 251–257 (TDIPGTT), and 276–279 (DTAG). Serine 236 lines the Mg(2+) pocket. Threonine 251, isoleucine 253, and threonine 256 together coordinate K(+). Threonine 257 contacts Mg(2+). Lysine 461 is a (6S)-5-formyl-5,6,7,8-tetrahydrofolate binding site.

It belongs to the TRAFAC class TrmE-Era-EngA-EngB-Septin-like GTPase superfamily. TrmE GTPase family. Homodimer. Heterotetramer of two MnmE and two MnmG subunits. The cofactor is K(+).

It is found in the cytoplasm. Functionally, exhibits a very high intrinsic GTPase hydrolysis rate. Involved in the addition of a carboxymethylaminomethyl (cmnm) group at the wobble position (U34) of certain tRNAs, forming tRNA-cmnm(5)s(2)U34. This chain is tRNA modification GTPase MnmE, found in Desulforamulus reducens (strain ATCC BAA-1160 / DSM 100696 / MI-1) (Desulfotomaculum reducens).